The following is a 159-amino-acid chain: 2-C-methyl-D-erythritol 2,4-cyclodiphosphate synthase (159 aa).

Residues D8 and H10 each coordinate a divalent metal cation. Residues 8–10 (DVH) and 34–35 (HS) contribute to the 4-CDP-2-C-methyl-D-erythritol 2-phosphate site. H42 provides a ligand contact to a divalent metal cation. 4-CDP-2-C-methyl-D-erythritol 2-phosphate contacts are provided by residues 56-58 (DIG), 61-65 (FPDTD), 100-106 (AQAPKML), 132-135 (TTTE), F139, and R142.

Belongs to the IspF family. As to quaternary structure, homotrimer. A divalent metal cation is required as a cofactor.

It carries out the reaction 4-CDP-2-C-methyl-D-erythritol 2-phosphate = 2-C-methyl-D-erythritol 2,4-cyclic diphosphate + CMP. It participates in isoprenoid biosynthesis; isopentenyl diphosphate biosynthesis via DXP pathway; isopentenyl diphosphate from 1-deoxy-D-xylulose 5-phosphate: step 4/6. Functionally, involved in the biosynthesis of isopentenyl diphosphate (IPP) and dimethylallyl diphosphate (DMAPP), two major building blocks of isoprenoid compounds. Catalyzes the conversion of 4-diphosphocytidyl-2-C-methyl-D-erythritol 2-phosphate (CDP-ME2P) to 2-C-methyl-D-erythritol 2,4-cyclodiphosphate (ME-CPP) with a corresponding release of cytidine 5-monophosphate (CMP). In Escherichia coli O81 (strain ED1a), this protein is 2-C-methyl-D-erythritol 2,4-cyclodiphosphate synthase.